We begin with the raw amino-acid sequence, 323 residues long: MSHLKNILFIIIVSLFFISSCSTVMSTEGWFMPFDNWLYQLQNADPVEISSSGFEIAVIDYSKDGSESGEYSPEEIKIMVDAGVVPVAYVNIGQAEDYRFYWKESWYTNTPEWLGEEDPAWPGNYFVKYWYNEWKEIVFSYLDRVIDQGFKGIYLDRIDSFEYWAQEGVISRRSAARKMINFVLEIAEYVRERKPDMLIIPQNGENILDFDDGQLASTVSGWAVENLFYLKTIPLEENETKSRLEYLIRLNRKGKFILSVDYVDDGSDSFENISRILDYYEKAKRNGCIPYAARSDLELDEMNVIEGIQPPEALKDYESRTYR.

This is an uncharacterized protein from Thermotoga maritima (strain ATCC 43589 / DSM 3109 / JCM 10099 / NBRC 100826 / MSB8).